The chain runs to 349 residues: tRNA pseudouridine synthase D (349 aa).

Phe27 serves as a coordination point for substrate. Asp80 (nucleophile) is an active-site residue. Substrate is bound at residue Asn129. The TRUD domain occupies 155 to 303; sequence GVPNYFGAQR…VEAARRAMLL (149 aa). Position 329 (Phe329) interacts with substrate.

The protein belongs to the pseudouridine synthase TruD family.

The enzyme catalyses uridine(13) in tRNA = pseudouridine(13) in tRNA. In terms of biological role, responsible for synthesis of pseudouridine from uracil-13 in transfer RNAs. The chain is tRNA pseudouridine synthase D from Escherichia coli O7:K1 (strain IAI39 / ExPEC).